Consider the following 203-residue polypeptide: Outer-membrane lipoprotein carrier protein (203 aa).

Residues 1–21 (MKKLIISCCLLATFSAAGAWA) form the signal peptide. Residues 174–203 (ALKSQQSGPISADKFKFRPPKGVTVDDQRQ) are disordered.

It belongs to the LolA family. Monomer.

The protein localises to the periplasm. Functionally, participates in the translocation of lipoproteins from the inner membrane to the outer membrane. Only forms a complex with a lipoprotein if the residue after the N-terminal Cys is not an aspartate (The Asp acts as a targeting signal to indicate that the lipoprotein should stay in the inner membrane). The protein is Outer-membrane lipoprotein carrier protein of Erwinia tasmaniensis (strain DSM 17950 / CFBP 7177 / CIP 109463 / NCPPB 4357 / Et1/99).